A 601-amino-acid chain; its full sequence is Glutathione-regulated potassium-efflux system protein KefB (601 aa).

The next 13 helical transmembrane spans lie at 4–24, 29–49, 55–75, 87–107, 115–135, 152–172, 177–197, 207–227, 230–250, 262–282, 284–304, 324–344, and 356–376; these read SDFL…VPLA, IGAV…GLGF, EILH…GLEL, IFGV…GLLM, AAVV…LQLM, VLLF…LLAG, HFDW…LIGG, FIAA…LVLG, LFMD…GVLL, AIDP…GMSL, LGVL…LVAV, MQFA…FSTA, and ALLL…MKLV. Positions 400–519 constitute an RCK N-terminal domain; the sequence is KPQVIVVGFG…AGVTQFSRET (120 aa).

This sequence belongs to the monovalent cation:proton antiporter 2 (CPA2) transporter (TC 2.A.37) family. KefB subfamily. Interacts with the regulatory subunit KefG.

The protein resides in the cell inner membrane. Functionally, pore-forming subunit of a potassium efflux system that confers protection against electrophiles. Catalyzes K(+)/H(+) antiport. This is Glutathione-regulated potassium-efflux system protein KefB from Shigella boydii serotype 18 (strain CDC 3083-94 / BS512).